Here is a 156-residue protein sequence, read N- to C-terminus: tRNA (cytidine(34)-2'-O)-methyltransferase (156 aa).

Positions 102, 124, and 132 each coordinate S-adenosyl-L-methionine.

It belongs to the class IV-like SAM-binding methyltransferase superfamily. RNA methyltransferase TrmH family. TrmL subfamily. Homodimer.

The protein resides in the cytoplasm. It carries out the reaction cytidine(34) in tRNA + S-adenosyl-L-methionine = 2'-O-methylcytidine(34) in tRNA + S-adenosyl-L-homocysteine + H(+). It catalyses the reaction 5-carboxymethylaminomethyluridine(34) in tRNA(Leu) + S-adenosyl-L-methionine = 5-carboxymethylaminomethyl-2'-O-methyluridine(34) in tRNA(Leu) + S-adenosyl-L-homocysteine + H(+). Methylates the ribose at the nucleotide 34 wobble position in the two leucyl isoacceptors tRNA(Leu)(CmAA) and tRNA(Leu)(cmnm5UmAA). Catalyzes the methyl transfer from S-adenosyl-L-methionine to the 2'-OH of the wobble nucleotide. This chain is tRNA (cytidine(34)-2'-O)-methyltransferase, found in Burkholderia pseudomallei (strain 1106a).